A 156-amino-acid polypeptide reads, in one-letter code: Small ribosomal subunit protein uS7 (156 aa).

This sequence belongs to the universal ribosomal protein uS7 family. As to quaternary structure, part of the 30S ribosomal subunit. Contacts proteins S9 and S11.

In terms of biological role, one of the primary rRNA binding proteins, it binds directly to 16S rRNA where it nucleates assembly of the head domain of the 30S subunit. Is located at the subunit interface close to the decoding center, probably blocks exit of the E-site tRNA. The polypeptide is Small ribosomal subunit protein uS7 (Erwinia tasmaniensis (strain DSM 17950 / CFBP 7177 / CIP 109463 / NCPPB 4357 / Et1/99)).